We begin with the raw amino-acid sequence, 464 residues long: Heterogeneous nuclear ribonucleoprotein K (464 aa).

An N-acetylmethionine modification is found at Met1. Positions 1–37 (METEQPEETFPNTETNGEFGKRPAEDMEEEQAFKRSR) are disordered. Residues 1–276 (METEQPEETF…GRGGRPMPPS (276 aa)) are necessary for interaction with DDX1. Residues 19–37 (FGKRPAEDMEEEQAFKRSR) show a composition bias toward basic and acidic residues. Lys34 is subject to N6-acetyllysine; alternate. A Glycyl lysine isopeptide (Lys-Gly) (interchain with G-Cter in SUMO1); alternate cross-link involves residue Lys34. Lys34 is covalently cross-linked (Glycyl lysine isopeptide (Lys-Gly) (interchain with G-Cter in SUMO2); alternate). At Ser36 the chain carries Phosphoserine. Residue Thr39 is modified to Phosphothreonine. In terms of domain architecture, KH 1 spans 42–104 (MVELRILLQS…ETIGEILKKI (63 aa)). Residues Lys52 and Lys60 each participate in a glycyl lysine isopeptide (Lys-Gly) (interchain with G-Cter in SUMO2) cross-link. Tandem repeats lie at residues 54 to 76 (AGAV…NASV) and 59 to 62 (GKGG). Positions 54–421 (AGAVIGKGGK…QIRHESGASI (368 aa)) are 2 X 22 AA approximate repeats. Residues 59–407 (GKGGKNIKAL…LAGSIIGKGG (349 aa)) are 5 X 4 AA repeats of G-X-G-G. Residues Ser75 and Ser116 each carry the phosphoserine modification. The KH 2 domain occupies 144-209 (DCELRLLIHQ…DRVVECIKII (66 aa)). Lys163 is covalently cross-linked (Glycyl lysine isopeptide (Lys-Gly) (interchain with G-Cter in SUMO1); alternate). A Glycyl lysine isopeptide (Lys-Gly) (interchain with G-Cter in SUMO2); alternate cross-link involves residue Lys163. Lys198 carries the post-translational modification N6-acetyllysine. Positions 209–337 (ILDLISESPI…RPGDRYDGMV (129 aa)) are interaction with ZIK1. 2 positions are modified to phosphoserine: Ser214 and Ser216. Residue Lys219 forms a Glycyl lysine isopeptide (Lys-Gly) (interchain with G-Cter in SUMO2); alternate linkage. Lys219 is modified (N6-succinyllysine; alternate). The interval 236-273 (YGGFTMMFDDRRGRPVGFPMRGRGGFDRMPPGRGGRPM) is RNA-binding RGG-box. 3 consecutive repeat copies span residues 245–250 (DRRGRP), 257–260 (GRGG), and 267–270 (GRGG). Positions 245–329 (DRRGRPVGFP…LMAYDRRGRP (85 aa)) are 2 X 6 AA approximate repeats. Positions 250–329 (PVGFPMRGRG…LMAYDRRGRP (80 aa)) are disordered. Low complexity predominate over residues 252–266 (GFPMRGRGGFDRMPP). Over residues 276-285 (SRRDYDDMSP) the composition is skewed to basic and acidic residues. A Phosphoserine modification is found at Ser284. A 3-4 repeat occupies 295–298 (GRGG). Arg316 is modified (omega-N-methylarginine). The 2-2 repeat unit spans residues 324 to 329 (DRRGRP). Position 377 is an omega-N-methylarginine (Arg377). At Ser379 the chain carries Phosphoserine. Tyr380 is subject to Phosphotyrosine. The 65-residue stretch at 387-451 (IITTQVTIPK…DQIQNAQYLL (65 aa)) folds into the KH 3 domain. 2 consecutive repeat copies span residues 399–421 (AGSI…GASI) and 404–407 (GKGG). Lys405 carries the N6-acetyllysine; alternate modification. Lys405 is covalently cross-linked (Glycyl lysine isopeptide (Lys-Gly) (interchain with G-Cter in SUMO2); alternate). At Ser420 the chain carries Phosphoserine. Lys422 is covalently cross-linked (Glycyl lysine isopeptide (Lys-Gly) (interchain with G-Cter in SUMO1); alternate). Residue Lys422 forms a Glycyl lysine isopeptide (Lys-Gly) (interchain with G-Cter in SUMO2); alternate linkage. Lys422 is covalently cross-linked (Glycyl lysine isopeptide (Lys-Gly) (interchain with G-Cter in SUMO); alternate).

Identified in the spliceosome C complex. Interacts with ANKRD28, RBM42 and ZIK1. Interacts with DDX1. Interacts with MDM2; this interaction leads to ubiquitination and proteasomal degradation. Interacts with p53/TP53. Interacts with BRDT. Interacts with IVNS1ABP. Interacts with PPIA/CYPA. Part of a transcription inhibitory ribonucleoprotein complex composed at least of the circular RNA circZNF827, ZNF827 and HNRNPL. Sumoylated by CBX4. Sumoylation is increased upon DNA damage, such as that produced by doxorubicin, etoposide, UV light and camptothecin, due to enhanced CBX4 phosphorylation by HIPK2 under these conditions. Post-translationally, ubiquitinated by MDM2. Doxorubicin treatment does not affect monoubiquitination, but slightly decreases HNRNPK poly-ubiquitination. In terms of processing, O-glycosylated (O-GlcNAcylated), in a cell cycle-dependent manner.

Its subcellular location is the cytoplasm. The protein localises to the nucleus. It localises to the nucleoplasm. It is found in the cell projection. The protein resides in the podosome. Functionally, one of the major pre-mRNA-binding proteins. Binds tenaciously to poly(C) sequences. Likely to play a role in the nuclear metabolism of hnRNAs, particularly for pre-mRNAs that contain cytidine-rich sequences. Can also bind poly(C) single-stranded DNA. Plays an important role in p53/TP53 response to DNA damage, acting at the level of both transcription activation and repression. When sumoylated, acts as a transcriptional coactivator of p53/TP53, playing a role in p21/CDKN1A and 14-3-3 sigma/SFN induction. As far as transcription repression is concerned, acts by interacting with long intergenic RNA p21 (lincRNA-p21), a non-coding RNA induced by p53/TP53. This interaction is necessary for the induction of apoptosis, but not cell cycle arrest. As part of a ribonucleoprotein complex composed at least of ZNF827, HNRNPL and the circular RNA circZNF827 that nucleates the complex on chromatin, may negatively regulate the transcription of genes involved in neuronal differentiation. The sequence is that of Heterogeneous nuclear ribonucleoprotein K (HNRNPK) from Bos taurus (Bovine).